Consider the following 137-residue polypeptide: Small ribosomal subunit protein uS11 (137 aa).

Disordered regions lie at residues 1 to 31 and 117 to 137; these read MPPK…AAHI and TISD…RRRV. Positions 12–21 are enriched in basic residues; it reads KTQKARRRDK.

This sequence belongs to the universal ribosomal protein uS11 family. In terms of assembly, part of the 30S ribosomal subunit. Interacts with proteins S7 and S18. Binds to IF-3.

Functionally, located on the platform of the 30S subunit, it bridges several disparate RNA helices of the 16S rRNA. Forms part of the Shine-Dalgarno cleft in the 70S ribosome. The chain is Small ribosomal subunit protein uS11 from Rhodococcus jostii (strain RHA1).